A 279-amino-acid polypeptide reads, in one-letter code: Uroplakin-3b (279 aa).

The N-terminal stretch at 1–26 (MGLPSRQPRLWLLLLVVLGWPQPCLT) is a signal peptide. Topologically, residues 27–200 (LDLIPYTPRI…DTWPGRRSGD (174 aa)) are lumenal. Asn-77 carries an N-linked (GlcNAc...) asparagine glycan. The chain crosses the membrane as a helical span at residues 201–221 (MIIITSILSSLAGLLLLAFLA). At 222 to 279 (ASSVRFSSLWWPEEAPEQLRIGSFMGKRYMTHHIPPSEAATLPVGCEPGLERFPSLSP) the chain is on the cytoplasmic side.

It belongs to the uroplakin-3 family. Heterodimer with uroplakin-1B (UPK1B). In terms of tissue distribution, expression is urothelium-specific.

The protein localises to the cell membrane. Its function is as follows. Component of the asymmetric unit membrane (AUM); a highly specialized biomembrane elaborated by terminally differentiated urothelial cells. May play an important role in AUM-cytoskeleton interaction in terminally differentiated urothelial cells. It also contributes to the formation of urothelial glycocalyx which may play an important role in preventing bacterial adherence. The protein is Uroplakin-3b (UPK3B) of Bos taurus (Bovine).